A 1423-amino-acid polypeptide reads, in one-letter code: Autophagy-related protein 11 (1423 aa).

Coiled-coil stretches lie at residues 551–589 and 625–978; these read DDEL…QSQA and SEGT…ASEL. 2 disordered regions span residues 583-660 and 1028-1048; these read LHRQ…SNRA and RAER…SLRK. Residues 585–602 show a composition bias toward polar residues; it reads RQSQASRPGNLFQPQTNS. The span at 631 to 648 shows a compositional bias: basic and acidic residues; it reads LLRRISELENELREEKQR. 2 stretches are compositionally biased toward polar residues: residues 650–660 and 1034–1047; these read SRIQNDLSNRA and QNPN…TSLR. Residues 1102–1130 adopt a coiled-coil conformation; it reads HRIKEVEHKARKWQKEARSYRDRAHIAQK. The interval 1327 to 1423 is disordered; it reads SLRAAAPETP…DYTYESPGKK (97 aa). Residues 1383-1395 show a composition bias toward basic and acidic residues; the sequence is KTAEPRRMLDRQE.

Belongs to the ATG11 family. In terms of assembly, homodimer and potential homooligomers. Interacts with ATG1 kinase and the ATG19 and ATG34 cargo protein transporters. Interacts with ATG9, ATG17 and ATG20.

The protein resides in the preautophagosomal structure membrane. The protein localises to the vacuole membrane. In terms of biological role, involved in cytoplasm to vacuole transport (Cvt), pexophagy, mitophagy and nucleophagy. Recruits mitochondria for their selective degradation via autophagy (mitophagy) during starvation, through its interaction with ATG32. Works as scaffold proteins that recruit ATG proteins to the pre-autophagosome (PAS), the site of vesicle/autophagosome formation. Required for ATG9 anterograde transport from the mitochondria to the PAS. Also recruits the ATG19-prAPE1 complex to the PAS. Required for the Cvt vesicles completion. Plays a role in morphological differentiation and cephalosporin production. In Hapsidospora chrysogena (Acremonium chrysogenum), this protein is Autophagy-related protein 11.